Consider the following 149-residue polypeptide: Tetracenomycin polyketide synthase protein TcmJ (149 aa).

The Cupin type-2 domain maps to 51–117 (HIELAPGESV…NRGNVPARVV (67 aa)). Positions 127 to 149 (PELGHVDTEPVPNPAAAPPKVGG) are disordered.

In terms of assembly, the tetracenomycin polyketide synthase (TCM PKS) is composed of a ketosynthase complex (TcmKL), an acyl carrier protein (TcmM), a cyclase (TcmN) and a probable second cyclase (TcmJ).

It catalyses the reaction 10 malonyl-CoA + 8 H(+) = tetracenomycin F2 + 10 CO2 + 10 CoA + 2 H2O. Its pathway is antibiotic biosynthesis; tetracenomycin C biosynthesis. Its function is as follows. Involved in the biosynthesis of tetracenomycin C (TCM C). Part of a type II polyketide synthase (PKS) that catalyzes the synthesis of tetracenomycin F2 (TCM F2), a precursor of TCM C, from malonyl-CoA. TcmJ, while not absolutely required, greatly increases the tetracenomycin F2 production. It probably acts as a cyclase. This Streptomyces glaucescens protein is Tetracenomycin polyketide synthase protein TcmJ.